The chain runs to 144 residues: 3-dehydroquinate dehydratase (144 aa).

Catalysis depends on Tyr22, which acts as the Proton acceptor. Residues Asn73, His79, and Asp86 each coordinate substrate. The active-site Proton donor is the His99. Residues 100–101 and Arg110 each bind substrate; that span reads IS.

The protein belongs to the type-II 3-dehydroquinase family. As to quaternary structure, homododecamer.

The catalysed reaction is 3-dehydroquinate = 3-dehydroshikimate + H2O. It participates in metabolic intermediate biosynthesis; chorismate biosynthesis; chorismate from D-erythrose 4-phosphate and phosphoenolpyruvate: step 3/7. Functionally, catalyzes a trans-dehydration via an enolate intermediate. This chain is 3-dehydroquinate dehydratase, found in Clostridium acetobutylicum (strain ATCC 824 / DSM 792 / JCM 1419 / IAM 19013 / LMG 5710 / NBRC 13948 / NRRL B-527 / VKM B-1787 / 2291 / W).